The chain runs to 188 residues: Phosphoribosylglycinamide formyltransferase (188 aa).

12-14 is a N(1)-(5-phospho-beta-D-ribosyl)glycinamide binding site; it reads GSN. (6R)-10-formyltetrahydrofolate is bound by residues K66, 91-94, and N108; that span reads MRLI. Catalysis depends on H110, which acts as the Proton donor.

This sequence belongs to the GART family.

It carries out the reaction N(1)-(5-phospho-beta-D-ribosyl)glycinamide + (6R)-10-formyltetrahydrofolate = N(2)-formyl-N(1)-(5-phospho-beta-D-ribosyl)glycinamide + (6S)-5,6,7,8-tetrahydrofolate + H(+). It functions in the pathway purine metabolism; IMP biosynthesis via de novo pathway; N(2)-formyl-N(1)-(5-phospho-D-ribosyl)glycinamide from N(1)-(5-phospho-D-ribosyl)glycinamide (10-formyl THF route): step 1/1. Its function is as follows. Catalyzes the transfer of a formyl group from 10-formyltetrahydrofolate to 5-phospho-ribosyl-glycinamide (GAR), producing 5-phospho-ribosyl-N-formylglycinamide (FGAR) and tetrahydrofolate. The chain is Phosphoribosylglycinamide formyltransferase from Staphylococcus aureus (strain MRSA252).